A 200-amino-acid polypeptide reads, in one-letter code: TATA-box-binding protein (200 aa).

2 repeat units span residues 25 to 101 (LQNI…ARII) and 115 to 192 (IQNI…YPVL).

It belongs to the TBP family. In terms of assembly, belongs to the TFIID complex together with the TBP-associated factors (TAFs). Binds DNA as monomer.

The protein localises to the nucleus. In terms of biological role, general transcription factor that functions at the core of the DNA-binding multiprotein factor TFIID. Binding of TFIID to the TATA box is the initial transcriptional step of the pre-initiation complex (PIC), playing a role in the activation of eukaryotic genes transcribed by RNA polymerase II. The chain is TATA-box-binding protein from Mesembryanthemum crystallinum (Common ice plant).